Consider the following 160-residue polypeptide: Nucleotide-binding protein MADE_1020535 (160 aa).

It belongs to the YajQ family.

In terms of biological role, nucleotide-binding protein. The chain is Nucleotide-binding protein MADE_1020535 from Alteromonas mediterranea (strain DSM 17117 / CIP 110805 / LMG 28347 / Deep ecotype).